Consider the following 783-residue polypeptide: Cation/H(+) antiporter 11 (783 aa).

A run of 12 helical transmembrane segments spans residues Val31 to Ile51, Ile61 to Phe81, Ala101 to Val120, Val135 to Phe155, Val175 to Leu195, Leu205 to Thr225, Ala244 to Ile264, Ile276 to Phe295, Val300 to Ala322, Ile360 to Tyr380, Leu389 to Val409, and Ala418 to Val438.

Belongs to the monovalent cation:proton antiporter 2 (CPA2) transporter (TC 2.A.37) family. CHX (TC 2.A.37.4) subfamily. In terms of tissue distribution, specifically expressed in pollen.

Its subcellular location is the membrane. In terms of biological role, may operate as a cation/H(+) antiporter. The chain is Cation/H(+) antiporter 11 (CHX11) from Arabidopsis thaliana (Mouse-ear cress).